Reading from the N-terminus, the 339-residue chain is Neutrophil cytosol factor 4 (339 aa).

The 122-residue stretch at 19 to 140 (DVAVSANIAD…IFFYQSAYDA (122 aa)) folds into the PX domain. A 1,2-diacyl-sn-glycero-3-phospho-(1D-myo-inositol-3-phosphate) is bound by residues 58 to 60 (RYR) and 92 to 94 (KVY). A Phosphothreonine modification is found at Thr-154. Residues 170 to 229 (MEAPRAEALFDFTGNSKLELSFKAGDVIFLLSKINKDWLEGTSQGATGIFPGSFVKILKD) form the SH3 domain. The region spanning 237–329 (TNWLRCYFYE…FPWKLHVTQK (93 aa)) is the PB1 domain. Residue Ser-315 is modified to Phosphoserine.

In terms of assembly, component of the phagocyte NADPH oxidase complex composed of an obligatory core heterodimer formed by the membrane proteins CYBA and CYBB and the cytosolic regulatory subunits NCF1/p47-phox, NCF2/p67-phox, NCF4/p40-phox and the small GTPase RAC1 or RAC2. Part of a cytosolic complex composed at least by NCF1, NCF2 and NCF4. Interacts with NCF2. Interacts with NCF1. The NCF2-NCF4 complex interacts with GBP7 (via GB1/RHD3-type G domain).

Its subcellular location is the cytoplasm. It is found in the cytosol. The protein localises to the endosome membrane. The protein resides in the membrane. Functionally, subunit of the phagocyte NADPH oxidase complex that mediates the transfer of electrons from cytosolic NADPH to O2 to produce the superoxide anion (O2(-)). In the activated complex, electrons are first transferred from NADPH to flavin adenine dinucleotide (FAD) and subsequently transferred via two heme molecules to molecular oxygen, producing superoxide through an outer-sphere reaction. Activation of the NADPH oxidase complex is initiated by the assembly of cytosolic subunits of the NADPH oxidase complex with the core NADPH oxidase complex to form a complex at the plasma membrane or phagosomal membrane. This activation process is initiated by phosphorylation dependent binding of the cytosolic NCF1/p47-phox subunit to the C-terminus of CYBA/p22-phox. The polypeptide is Neutrophil cytosol factor 4 (Mus musculus (Mouse)).